The primary structure comprises 521 residues: Biotinidase (521 aa).

A signal peptide spans 1–25 (MSGARTAHALVFLLGCSALALGVCS). The CN hydrolase domain occupies 50–329 (NPLELSSRQQ…QGLVGTENTT (280 aa)). Catalysis depends on E90, which acts as the Proton acceptor. N128 and N181 each carry an N-linked (GlcNAc...) asparagine glycan. Catalysis depends on K190, which acts as the Proton donor. Residue C223 is the Nucleophile of the active site. The N-linked (GlcNAc...) asparagine glycan is linked to N380.

It belongs to the carbon-nitrogen hydrolase superfamily. BTD/VNN family.

It localises to the secreted. It is found in the extracellular space. The catalysed reaction is biocytin + H2O = biotin + L-lysine. It carries out the reaction biotin amide + H2O = biotin + NH4(+). In terms of biological role, catalytic release of biotin from biocytin, the product of biotin-dependent carboxylases degradation. The chain is Biotinidase from Rattus norvegicus (Rat).